The primary structure comprises 781 residues: Catenin beta-1 (781 aa).

The tract at residues G34–D56 is disordered. 10 ARM repeats span residues N141–K180, R225–L264, E267–Y306, S351–D390, A391–C429, Y432–S473, E479–L519, P521–E562, I584–Q623, and K625–E664. The segment covering M735 to G745 has biased composition (basic and acidic residues). The interval M735 to L781 is disordered.

The protein belongs to the beta-catenin family. In terms of assembly, interacts with EP-Cadherin/CDH3. Interacts with custos; the interaction is positively regulated by Wnt stimulation. In terms of processing, phosphorylation by gsk3b promotes ubiquitination and subsequent degradation by the proteasome. Post-translationally, ubiquitinated when phosphorylated by gsk3b, leading to its degradation. Expressed at intercalated disks in the heart (at protein level).

Its subcellular location is the cytoplasm. It localises to the nucleus. The protein resides in the cell membrane. Its function is as follows. Key downstream component of the canonical Wnt signaling pathway. In the absence of Wnt, forms a complex with axin1, axin2, apc, csnk1a1 and gsk3b that promotes phosphorylation on N-terminal Ser and Thr residues and ubiquitination of ctnnb1 and its subsequent degradation by the proteasome. In the presence of Wnt ligand, ctnnb1 is not ubiquitinated and accumulates in the nucleus, where it acts as a coactivator for transcription factors of the TCF/LEF family, leading to activate Wnt responsive genes. Plays a key role in dorsoventral patterning: in prospective ventral blastomeres, its down-regulation by axin1 and axin2 leads to inhibit the Wnt signaling pathway, while in prospective dorsal blastomeres, degradation of axin results in stabilization and nuclear translocation of ctnnb1. This Xenopus laevis (African clawed frog) protein is Catenin beta-1.